The primary structure comprises 278 residues: Large ribosomal subunit protein uL2 (278 aa).

The tract at residues 224–278 (VAMNPVDHPHGGGEGRTSGGRNPVTPWGVPTKGKKTRSNKRTDTFILSSRHNRKK) is disordered.

It belongs to the universal ribosomal protein uL2 family. In terms of assembly, part of the 50S ribosomal subunit. Forms a bridge to the 30S subunit in the 70S ribosome.

In terms of biological role, one of the primary rRNA binding proteins. Required for association of the 30S and 50S subunits to form the 70S ribosome, for tRNA binding and peptide bond formation. It has been suggested to have peptidyltransferase activity; this is somewhat controversial. Makes several contacts with the 16S rRNA in the 70S ribosome. This Methylorubrum extorquens (strain CM4 / NCIMB 13688) (Methylobacterium extorquens) protein is Large ribosomal subunit protein uL2.